A 418-amino-acid chain; its full sequence is Mitochondrial outer membrane protein SLC25A46 (418 aa).

2 positions are modified to phosphoserine: Ser32 and Ser35. Thr45 carries the phosphothreonine modification. The interval 46–96 (PPDIPGSRNLHWGEKSPSYGVPSAPPTLEGSAEEPFPGGGEGPRPGPSSEQ) is disordered. Residues 96-187 (QLNRFAGFGI…GIISEFTPLP (92 aa)) form a Solcar 1 repeat. The next 6 helical transmembrane spans lie at 103–123 (FGIGLASLFTENVLAHPCIVL), 167–187 (FIVQGVTLGAEGIISEFTPLP), 202–222 (HLLLKCLTYMVAMPFYSASLI), 258–278 (LLPLFSLIFPTVLHGVLHYII), 314–334 (FPELIANFAASLCSDVILYPL), and 382–402 (VFGFYKGFGAVIIQYTLHATI). A Solcar 2 repeat occupies 311–413 (DAYFPELIAN…QITKMIYSTL (103 aa)).

This sequence belongs to the mitochondrial carrier (TC 2.A.29) family. As to quaternary structure, associates with the mitochondrial contact site and cristae organizing system (MICOS) complex. May associate with the endoplasmic reticulum membrane protein complex (EMC).

It localises to the mitochondrion outer membrane. Its function is as follows. Transmembrane protein of the mitochondrial outer membrane that controls mitochondrial organization. May regulate the assembly of the MICOS (mitochondrial contact site and cristae organizing system) complex which is essential to the biogenesis and dynamics of mitochondrial cristae, the inwards folds of the inner mitochondrial membrane. Through its interaction with the EMC (endoplasmic reticulum membrane protein complex), could regulate mitochondrial lipid homeostasis and thereby mitochondrial fission. The protein is Mitochondrial outer membrane protein SLC25A46 of Mus musculus (Mouse).